The sequence spans 195 residues: Apoptosis-associated speck-like protein containing a CARD (195 aa).

One can recognise a Pyrin domain in the interval 1–91; it reads MGCTRDAILD…AEQLQETMSK (91 aa). Residues Lys55 and Lys174 each participate in a glycyl lysine isopeptide (Lys-Gly) (interchain with G-Cter in ubiquitin) cross-link. The region spanning 107–195 is the CARD domain; it reads TAKPGLHFVD…PYLVDDLEQS (89 aa). Ser195 is modified (phosphoserine).

As to quaternary structure, self-associates; enforced oligomerization induces apoptosis, NF-kappa-B regulation and interleukin-1 beta secretion. Homooligomers can form disk-like particles of approximately 12 nm diameter and approximately 1 nm height. Component of several inflammasomes containing one pattern recognition receptor/sensor, such as NLRP1, NLRP2, NLRP3, NLRP6, NLRC4, AIM2, MEFV or NOD2, and probably NLRC4 or NLRP12. Major component of the ASC pyroptosome, a 1-2 um supramolecular assembly (one per macrophage cell) which consists of oligomerized PYCARD dimers and CASP1. Interacts with CASP1 (precursor form); the interaction induces activation of CASP1 leading to the processing of interleukin-1 beta; PYCARD competes with RIPK2 for binding to CASP1. Interacts with NLRP3; the interaction requires the homooligomerization of NLRP3. Interacts with NLRP2, NLRC4, MEFV, CARD16, AIM2, NOD2, RIGI, RIPK2, PYDC1, PYDC2, NLRP10, CASP8, CHUK, IKBKB and BAX. Component of the AIM2 PANoptosome complex, a multiprotein complex that drives inflammatory cell death (PANoptosis). Phosphorylated. In terms of processing, 'Lys-63'-linked polyubiquitination by TRAF3 is critical for speck formation and inflammasome activation. 'Lys-63'-linked deubiquitinated by USP50; a crucial step for NLRP3-mediated inflammasome activation. 'Lys-63'-linked polyubiquitination by PELI1 is also critical for speck formation and inflammasome activation. Deubiquitinated by USP3 that cleaves 'Lys-48'-linked ubiquitin chains and strengthens its stability by blocking proteasomal degradation.

The protein localises to the cytoplasm. The protein resides in the inflammasome. Its subcellular location is the endoplasmic reticulum. It is found in the mitochondrion. It localises to the nucleus. In terms of biological role, functions as a key mediator in apoptosis and inflammation. Promotes caspase-mediated apoptosis involving predominantly caspase-8 and also caspase-9 in a probable cell type-specific manner. Involved in activation of the mitochondrial apoptotic pathway, promotes caspase-8-dependent proteolytic maturation of BID independently of FADD in certain cell types and also mediates mitochondrial translocation of BAX and activates BAX-dependent apoptosis coupled to activation of caspase-9, -2 and -3. Involved in innate immune response by acting as an integral adapter in the assembly of various inflammasomes (NLRP2, NLRP3, NLRP6 and AIM2) which recruit and activate caspase-1 leading to processing and secretion of pro-inflammatory cytokines. Caspase-1-dependent inflammation leads to macrophage pyroptosis, a form of cell death. The function as activating adapter in different types of inflammasomes is mediated by the pyrin and CARD domains and their homotypic interactions. Clustered PYCARD nucleates the formation of caspase-1 filaments through the interaction of their respective CARD domains, acting as a platform for of caspase-1 polymerization. In the NLRC4 inflammasomes seems not be required but facilitates the processing of procaspase-1. In cooperation with NOD2 involved in an inflammasome activated by bacterial muramyl dipeptide leading to caspase-1 activation. May be involved in RIGI-triggered pro-inflammatory responses and inflammasome activation. In collaboration with AIM2 which detects cytosolic double-stranded DNA may also be involved in a caspase-1-independent cell death that involves caspase-8. In adaptive immunity may be involved in maturation of dendritic cells to stimulate T-cell immunity and in cytoskeletal rearrangements coupled to chemotaxis and antigen uptake may be involved in post-transcriptional regulation of the guanine nucleotide exchange factor DOCK2; the latter function is proposed to involve the nuclear form. Also involved in transcriptional activation of cytokines and chemokines independent of the inflammasome; this function may involve AP-1, NF-kappa-B, MAPK and caspase-8 signaling pathways. For regulation of NF-kappa-B activating and inhibiting functions have been reported. Modulates NF-kappa-B induction at the level of the IKK complex by inhibiting kinase activity of CHUK and IKBK. Proposed to compete with RIPK2 for association with CASP1 thereby down-regulating CASP1-mediated RIPK2-dependent NF-kappa-B activation and activating interleukin-1 beta processing. Modulates host resistance to DNA virus infection, probably by inducing the cleavage of and inactivating CGAS in presence of cytoplasmic double-stranded DNA. The protein is Apoptosis-associated speck-like protein containing a CARD (PYCARD) of Bos taurus (Bovine).